The sequence spans 347 residues: F-box/LRR-repeat/kelch-repeat protein At2g27520 (347 aa).

The region spanning 1–50 is the F-box domain; sequence MVRLDLPWDLVDEILSRLPATSLGRLRFTCKRWNALFKDPEFITKQFHKA. LRR repeat units follow at residues 59-82, 152-177, 196-220, and 261-285; these read LSNFGVYSMSTNLKEIPNNIEIAQ, CKLVEIFELKSNSWRVLSKVHPNVEK, KFNILSFDFTTETFRSVPLPFLYQD, and LSWSKSFTLEFDSLRDLPVMSILRI. The stretch at 138-187 is one Kelch 1 repeat; the sequence is KSYDSYKILRITYGCKLVEIFELKSNSWRVLSKVHPNVEKHYYGGVSFKG. The Kelch 2 repeat unit spans residues 306-347; it reads MIYIVGKNGFKKLSYEKDRSNLWRLPFFFSYVPSLVGLYPPM.

The protein is F-box/LRR-repeat/kelch-repeat protein At2g27520 of Arabidopsis thaliana (Mouse-ear cress).